A 1707-amino-acid polypeptide reads, in one-letter code: Latrophilin Cirl (1707 aa).

At 1 to 767 (MLPTILSISY…LFTMFDGNMR (767 aa)) the chain is on the extracellular side. In terms of domain architecture, SUEL-type lectin spans 25-114 (ACEGKKLTIE…KYLEAHYQCI (90 aa)). N-linked (GlcNAc...) asparagine glycosylation is present at Asn-142. The segment at 176–301 (GLFNVPPQHT…TAASGAVVPG (126 aa)) is disordered. 2 stretches are compositionally biased toward polar residues: residues 185 to 198 (TAVT…STTA) and 256 to 265 (NATSPSNTRI). A glycan (N-linked (GlcNAc...) asparagine) is linked at Asn-256. Over residues 275-285 (DDGTLLTTKSS) the composition is skewed to low complexity. Residues Asn-302, Asn-341, Asn-398, Asn-655, Asn-703, and Asn-730 are each glycosylated (N-linked (GlcNAc...) asparagine). The disordered stretch occupies residues 376–400 (YDEYDDDPSSTTPAPNGGDCLHNSS). Positions 561 to 754 (RSVVQKVKNI…AILMDVVDEH (194 aa)) constitute a GAIN-B domain. 2 disulfides stabilise this stretch: Cys-709-Cys-736 and Cys-724-Cys-738. The GPS stretch occupies residues 709–754 (CVFWNYIDHAWSANGCSLESTNRTHSVCSCNHLTNFAILMDVVDEH). The helical transmembrane segment at 768 to 788 (IFIYISIGICVVFIVIALLTL) threads the bilayer. At 789–801 (KLFNGVFVKSART) the chain is on the cytoplasmic side. A helical membrane pass occupies residues 802–822 (SIYTSIYLCLLAIELLFLLGI). Residues 823-828 (EQTETS) are Extracellular-facing. The helical transmembrane segment at 829–849 (IFCGFITIFLHCAILSGTAWF) threads the bilayer. Topologically, residues 850 to 875 (CYEAFHSYSTLTSDELLLEVDQTPKV) are cytoplasmic. Residues 876-896 (NCYYLLSYGLSLSVVAISLVI) traverse the membrane as a helical segment. At 897 to 920 (DPSTYTQNDYCVLMEANALFYATF) the chain is on the extracellular side. A helical transmembrane segment spans residues 921–941 (VIPVLVFFVAAIGYTFLSWII). The Cytoplasmic portion of the chain corresponds to 942 to 968 (LCRKSRTGLKTKEHTRLASVRFDIRCS). A helical membrane pass occupies residues 969 to 989 (FVFLLLLSAVWCSSYFYLRGA). The Extracellular segment spans residues 990–999 (KMDDDTADVY). The chain crosses the membrane as a helical span at residues 1000–1020 (GYCFICFNTLLGLYIFVFHCI). Topologically, residues 1021–1707 (QNEKIRREYR…VRCYLEPLAK (687 aa)) are cytoplasmic. Ser-1156 is subject to Phosphoserine. Disordered stretches follow at residues 1169–1188 (AHKQ…GEGY) and 1236–1260 (KPNS…SGSL). The segment covering 1172–1181 (QQQQQQQQQQ) has biased composition (low complexity). Residues Ser-1255 and Ser-1262 each carry the phosphoserine modification. Positions 1316–1326 (QQLHQQQQQQL) are enriched in low complexity. Disordered stretches follow at residues 1316–1335 (QQLH…QVEQ), 1450–1538 (GGGS…SDER), 1563–1582 (APLD…EHNG), and 1612–1687 (GGRL…QQRH). A phosphoserine mark is found at Ser-1327 and Ser-1328. Residues 1456–1481 (GGSVSSRSQQQQLKKQQQQQSLAQQR) are compositionally biased toward low complexity. 2 stretches are compositionally biased toward acidic residues: residues 1489 to 1503 (DDDD…EEAT) and 1513 to 1526 (CDED…DLED). The segment covering 1635 to 1650 (QTPAQKRQQLQKLSPQ) has biased composition (polar residues). The segment covering 1651-1673 (STTSSSSHTSHSNPNPHPLQLTH) has biased composition (low complexity). The segment covering 1674 to 1686 (PHPHQHPPHHQQR) has biased composition (basic residues).

This sequence belongs to the G-protein coupled receptor 2 family. LN-TM7 subfamily. As to quaternary structure, forms a heterodimer, consisting of a large extracellular region non-covalently linked to a seven-transmembrane moiety. Proteolytically cleaved into 2 subunits, an extracellular subunit and a seven-transmembrane subunit.

It localises to the cell membrane. The chain is Latrophilin Cirl from Drosophila yakuba (Fruit fly).